The following is a 34-amino-acid chain: MGFPISAAAIALRACSAAVPRGRAISQAMPWASQ.

This is an uncharacterized protein from Rhizobium radiobacter (Agrobacterium tumefaciens).